We begin with the raw amino-acid sequence, 161 residues long: Ubiquitin-conjugating enzyme E2Q-like protein 1 (161 aa).

The region spanning 1 to 154 (MKELQDIARL…VKTHEKYGWV (154 aa)) is the UBC core domain. Cysteine 88 acts as the Glycyl thioester intermediate in catalysis.

This sequence belongs to the ubiquitin-conjugating enzyme family. As to quaternary structure, interacts with FBXW7.

It is found in the nucleus. The enzyme catalyses S-ubiquitinyl-[E1 ubiquitin-activating enzyme]-L-cysteine + [E2 ubiquitin-conjugating enzyme]-L-cysteine = [E1 ubiquitin-activating enzyme]-L-cysteine + S-ubiquitinyl-[E2 ubiquitin-conjugating enzyme]-L-cysteine.. It participates in protein modification; protein ubiquitination. In terms of biological role, probable E2 ubiquitin-protein ligase that catalyzes the covalent attachment of ubiquitin to target proteins. May facilitate the monoubiquitination and degradation of MTOR and CCNE1 through interaction with FBXW7. In Homo sapiens (Human), this protein is Ubiquitin-conjugating enzyme E2Q-like protein 1 (UBE2QL1).